Reading from the N-terminus, the 1096-residue chain is Adenylate-forming reductase Nps9 (1096 aa).

Residues 39–352 (DDTLTEISFL…TTEFGAPTQL (314 aa)) form an adenylation (A) domain region. AMP is bound by residues H236, 339 to 340 (VQ), T344, and 425 to 428 (IIGR). A Carrier domain is found at 569–656 (EWTVSTLEHW…LLADRVAKIA (88 aa)). Residue S605 is modified to O-(pantetheine 4'-phosphoryl)serine. The segment at 716–952 (LTGSTGGLGS…MPAEKVSAAI (237 aa)) is reductase (R) domain. Residues 720 to 723 (TGGL), 807 to 809 (SAW), Y880, and K884 each bind NADP(+).

This sequence belongs to the adenylate-forming reductase family.

Its function is as follows. Adenylate-forming reductase, a natural product biosynthesis enzyme that resembles non-ribosomal peptide synthetases, yet serves to modify one substrate, rather than to condense two or more building blocks. The A-domain preferentially accepts L-threonine as substrate. The natural product of the enzyme is not yet known. The protein is Adenylate-forming reductase Nps9 of Serpula lacrymans var. lacrymans (strain S7.9) (Dry rot fungus).